We begin with the raw amino-acid sequence, 976 residues long: Vacuolar membrane protease (976 aa).

Residues 1–15 lie on the Cytoplasmic side of the membrane; the sequence is MKLKSVFRSVLKYRK. Residues 16-36 form a helical membrane-spanning segment; sequence TNLSLLLLITYSIITLLYIFD. Residues 37 to 359 are Vacuolar-facing; sequence HERYKLNLPK…KFFVISAKTL (323 aa). 2 N-linked (GlcNAc...) asparagine glycosylation sites follow: Asn96 and Asn121. Zn(2+) is bound by residues His156 and Asp168. Asn189 carries N-linked (GlcNAc...) asparagine glycosylation. Glu200 serves as the catalytic Proton acceptor. Glu201 contacts Zn(2+). Asn212 and Asn217 each carry an N-linked (GlcNAc...) asparagine glycan. Residues Glu226 and His300 each coordinate Zn(2+). Residues 360 to 380 form a helical membrane-spanning segment; the sequence is FYWNCIFLLVSPVVAIGLYLI. Residues 381–392 are Cytoplasmic-facing; sequence SRDRMTWKSHSW. A helical transmembrane segment spans residues 393-412; sequence LSWTRFPLSLAAGIIVQKLF. Residues 413–428 lie on the Vacuolar side of the membrane; it reads SNDIIRSNPLTFSRNY. Residues 429-449 form a helical membrane-spanning segment; the sequence is FWPISAFFTQVIFTSYVLINC. The Cytoplasmic portion of the chain corresponds to 450–461; sequence SNFFFPCADMKS. The helical transmembrane segment at 462–482 threads the bilayer; that stretch reads LSIIELFIILWTILLFTSKLL. Over 483–496 the chain is Vacuolar; that stretch reads YSSDYRYTGLYPLS. The chain crosses the membrane as a helical span at residues 497–517; it reads IFFLLSTIAAILRLLALALGM. Over 518-627 the chain is Cytoplasmic; the sequence is RTRKRLGREC…NSLKLEYTDY (110 aa). The disordered stretch occupies residues 528 to 610; it reads RDHHSNYSSH…PLLKGSNSME (83 aa). A compositionally biased stretch (polar residues) spans 549–558; sequence NLEQPQDQFT. Over residues 559-570 the composition is skewed to low complexity; sequence SSQDDQASIQDD. The span at 582-601 shows a compositional bias: basic and acidic residues; that stretch reads NVDEDHGMDSSSQQHDERVP. A helical membrane pass occupies residues 628–648; the sequence is AWIIQFLLIVPIPSFILFNSV. The Vacuolar segment spans residues 649 to 668; sequence DVIMDALNHTVQEGSKATFD. A glycan (N-linked (GlcNAc...) asparagine) is linked at Asn656. The chain crosses the membrane as a helical span at residues 669 to 689; sequence VLRFGMVGSILMALPILPFFY. The Cytoplasmic segment spans residues 690 to 692; sequence KVN. The chain crosses the membrane as a helical span at residues 693–713; the sequence is YITISLTALLFLISASKTLLV. Residues 714–976 lie on the Vacuolar side of the membrane; the sequence is HPFTNSNPLK…LVIVKDAIIL (263 aa). N-linked (GlcNAc...) asparagine glycosylation is found at Asn768, Asn796, Asn811, Asn866, and Asn937.

The protein belongs to the peptidase M28 family. Requires Zn(2+) as cofactor.

It localises to the vacuole membrane. Its function is as follows. May be involved in vacuolar sorting and osmoregulation. The protein is Vacuolar membrane protease of Saccharomyces cerevisiae (strain AWRI1631) (Baker's yeast).